We begin with the raw amino-acid sequence, 271 residues long: Sec-independent protein translocase protein TatC (271 aa).

5 helical membrane-spanning segments follow: residues 24 to 44 (ISVG…EQIF), 78 to 98 (FFAG…LFIA), 112 to 132 (FLFV…YFVF), 159 to 179 (LVIK…GLLL), and 215 to 235 (FTQV…IFFG). Residues 247-271 (AAEEAQWAADHNVDDDDVDHPEHKA) are disordered.

Belongs to the TatC family. In terms of assembly, the Tat system comprises two distinct complexes: a TatABC complex, containing multiple copies of TatA, TatB and TatC subunits, and a separate TatA complex, containing only TatA subunits. Substrates initially bind to the TatABC complex, which probably triggers association of the separate TatA complex to form the active translocon.

The protein localises to the cell inner membrane. Part of the twin-arginine translocation (Tat) system that transports large folded proteins containing a characteristic twin-arginine motif in their signal peptide across membranes. Together with TatB, TatC is part of a receptor directly interacting with Tat signal peptides. The chain is Sec-independent protein translocase protein TatC from Magnetococcus marinus (strain ATCC BAA-1437 / JCM 17883 / MC-1).